The primary structure comprises 334 residues: Myo-inositol 2-dehydrogenase (334 aa).

Belongs to the Gfo/Idh/MocA family.

The enzyme catalyses myo-inositol + NAD(+) = scyllo-inosose + NADH + H(+). It functions in the pathway polyol metabolism; myo-inositol metabolism. Its function is as follows. Catalyzes the NAD(+)-dependent oxidation of myo-inositol (MI) to 2-keto-myo-inositol (scyllo-inosose), and thus probably functions in a myo-inositol degradation pathway together with IolM, IolN and IolO. Has no activity with scyllo-inositol and much reduced activity (78-fold lower catalytic efficiency) with 1D-chiro-inositol. The sequence is that of Myo-inositol 2-dehydrogenase from Thermotoga maritima (strain ATCC 43589 / DSM 3109 / JCM 10099 / NBRC 100826 / MSB8).